Consider the following 309-residue polypeptide: Homoserine O-succinyltransferase (309 aa).

C142 (acyl-thioester intermediate) is an active-site residue. Residues K163 and S192 each coordinate substrate. Catalysis depends on H235, which acts as the Proton acceptor. E237 is a catalytic residue. Position 249 (R249) interacts with substrate.

The protein belongs to the MetA family. As to quaternary structure, homodimer.

Its subcellular location is the cytoplasm. The enzyme catalyses L-homoserine + succinyl-CoA = O-succinyl-L-homoserine + CoA. It functions in the pathway amino-acid biosynthesis; L-methionine biosynthesis via de novo pathway; O-succinyl-L-homoserine from L-homoserine: step 1/1. Functionally, transfers a succinyl group from succinyl-CoA to L-homoserine, forming succinyl-L-homoserine. In Escherichia coli (strain SE11), this protein is Homoserine O-succinyltransferase.